Reading from the N-terminus, the 225-residue chain is Small ribosomal subunit protein uS3 (225 aa).

Positions 38-106 (LRAHLRRKLS…DVALNIVEIR (69 aa)) constitute a KH type-2 domain.

The protein belongs to the universal ribosomal protein uS3 family. Part of the 30S ribosomal subunit. Forms a tight complex with proteins S10 and S14.

Binds the lower part of the 30S subunit head. Binds mRNA in the 70S ribosome, positioning it for translation. This is Small ribosomal subunit protein uS3 from Gluconacetobacter diazotrophicus (strain ATCC 49037 / DSM 5601 / CCUG 37298 / CIP 103539 / LMG 7603 / PAl5).